The following is a 179-amino-acid chain: Large ribosomal subunit protein uL10 (179 aa).

Belongs to the universal ribosomal protein uL10 family. Part of the ribosomal stalk of the 50S ribosomal subunit. The N-terminus interacts with L11 and the large rRNA to form the base of the stalk. The C-terminus forms an elongated spine to which L12 dimers bind in a sequential fashion forming a multimeric L10(L12)X complex.

Forms part of the ribosomal stalk, playing a central role in the interaction of the ribosome with GTP-bound translation factors. The chain is Large ribosomal subunit protein uL10 from Thermomicrobium roseum (strain ATCC 27502 / DSM 5159 / P-2).